A 336-amino-acid polypeptide reads, in one-letter code: Phenylalanine--tRNA ligase alpha subunit (336 aa).

Residue Glu259 coordinates Mg(2+).

Belongs to the class-II aminoacyl-tRNA synthetase family. Phe-tRNA synthetase alpha subunit type 1 subfamily. In terms of assembly, tetramer of two alpha and two beta subunits. It depends on Mg(2+) as a cofactor.

The protein localises to the cytoplasm. The catalysed reaction is tRNA(Phe) + L-phenylalanine + ATP = L-phenylalanyl-tRNA(Phe) + AMP + diphosphate + H(+). This Tropheryma whipplei (strain Twist) (Whipple's bacillus) protein is Phenylalanine--tRNA ligase alpha subunit.